Consider the following 77-residue polypeptide: Serine protease inhibitor 1 (77 aa).

The N-terminal stretch at 1-17 is a signal peptide; the sequence is MMFTPLIVLTLLVLATA. Intrachain disulfides connect C21-C53, C30-C48, C33-C44, C37-C74, and C55-C68. The TIL domain occupies 21-74; sequence CGPNEQWSDCPGCELQCGESDKPCPAMCGDPKCYCSPDQYRRIPDGRCIRKIQC.

It is found in the secreted. Its function is as follows. Defends the organism against the host's proteinases. The polypeptide is Serine protease inhibitor 1 (Anisakis simplex (Herring worm)).